The chain runs to 166 residues: Lipoprotein signal peptidase (166 aa).

4 helical membrane passes run 11 to 31 (LNLV…LYIL), 42 to 62 (IYIT…AFGL), 69 to 89 (VIYN…IFMM), and 99 to 119 (FFAL…VYTA). Active-site residues include Asp-122 and Asp-140. Residues 133 to 153 (WFVFNVADIFITIGVFCLILV) traverse the membrane as a helical segment.

Belongs to the peptidase A8 family.

Its subcellular location is the cell inner membrane. It catalyses the reaction Release of signal peptides from bacterial membrane prolipoproteins. Hydrolyzes -Xaa-Yaa-Zaa-|-(S,diacylglyceryl)Cys-, in which Xaa is hydrophobic (preferably Leu), and Yaa (Ala or Ser) and Zaa (Gly or Ala) have small, neutral side chains.. It functions in the pathway protein modification; lipoprotein biosynthesis (signal peptide cleavage). Its function is as follows. This protein specifically catalyzes the removal of signal peptides from prolipoproteins. The chain is Lipoprotein signal peptidase from Pelagibacter ubique (strain HTCC1062).